The sequence spans 146 residues: Large ribosomal subunit protein uL11 (146 aa).

The protein belongs to the universal ribosomal protein uL11 family. In terms of assembly, part of the ribosomal stalk of the 50S ribosomal subunit. Interacts with L10 and the large rRNA to form the base of the stalk. L10 forms an elongated spine to which L12 dimers bind in a sequential fashion forming a multimeric L10(L12)X complex. Post-translationally, one or more lysine residues are methylated.

Forms part of the ribosomal stalk which helps the ribosome interact with GTP-bound translation factors. In Corynebacterium jeikeium (strain K411), this protein is Large ribosomal subunit protein uL11.